Here is a 203-residue protein sequence, read N- to C-terminus: Inosine triphosphate pyrophosphatase (203 aa).

Position 10 to 15 (10 to 15) interacts with ITP; the sequence is TGNQNK. Glu40 contributes to the Mg(2+) binding site. ITP contacts are provided by residues Lys52, 68-69, Lys85, 145-148, Lys168, and 173-174; these read DT, FGWD, and HR.

Belongs to the HAM1 NTPase family. As to quaternary structure, homodimer. It depends on Mg(2+) as a cofactor. Requires Mn(2+) as cofactor.

It localises to the cytoplasm. The enzyme catalyses ITP + H2O = IMP + diphosphate + H(+). It catalyses the reaction dITP + H2O = dIMP + diphosphate + H(+). The catalysed reaction is XTP + H2O = XMP + diphosphate + H(+). In terms of biological role, pyrophosphatase that hydrolyzes non-canonical purine nucleotides such as inosine triphosphate (ITP), deoxyinosine triphosphate (dITP) or xanthosine 5'-triphosphate (XTP) to their respective monophosphate derivatives. The enzyme does not distinguish between the deoxy- and ribose forms. Probably excludes non-canonical purines from RNA and DNA precursor pools, thus preventing their incorporation into RNA and DNA and avoiding chromosomal lesions. In Nematostella vectensis (Starlet sea anemone), this protein is Inosine triphosphate pyrophosphatase.